Here is a 209-residue protein sequence, read N- to C-terminus: Potassium-transporting ATPase KdpC subunit (209 aa).

The chain crosses the membrane as a helical span at residues 11–31 (MILALTVLTGLAYPLAVTAVA). Residues 188 to 209 (AQAPTPRQPEPGHPEPGRPEVR) form a disordered region. A compositionally biased stretch (basic and acidic residues) spans 197–209 (EPGHPEPGRPEVR).

It belongs to the KdpC family. In terms of assembly, the system is composed of three essential subunits: KdpA, KdpB and KdpC.

It localises to the cell inner membrane. In terms of biological role, part of the high-affinity ATP-driven potassium transport (or Kdp) system, which catalyzes the hydrolysis of ATP coupled with the electrogenic transport of potassium into the cytoplasm. This subunit acts as a catalytic chaperone that increases the ATP-binding affinity of the ATP-hydrolyzing subunit KdpB by the formation of a transient KdpB/KdpC/ATP ternary complex. This is Potassium-transporting ATPase KdpC subunit from Rhodospirillum centenum (strain ATCC 51521 / SW).